Reading from the N-terminus, the 298-residue chain is Ethanolamine ammonia-lyase small subunit (298 aa).

The adenosylcob(III)alamin site is built by valine 210, glutamate 231, and cysteine 261.

This sequence belongs to the EutC family. The basic unit is a heterodimer which dimerizes to form tetramers. The heterotetramers trimerize; 6 large subunits form a core ring with 6 small subunits projecting outwards. Adenosylcob(III)alamin serves as cofactor.

It localises to the bacterial microcompartment. It carries out the reaction ethanolamine = acetaldehyde + NH4(+). The protein operates within amine and polyamine degradation; ethanolamine degradation. Catalyzes the deamination of various vicinal amino-alcohols to oxo compounds. Allows this organism to utilize ethanolamine as the sole source of nitrogen and carbon in the presence of external vitamin B12. This is Ethanolamine ammonia-lyase small subunit from Salmonella typhi.